Reading from the N-terminus, the 105-residue chain is Phosphoribosyl-ATP pyrophosphatase (105 aa).

This sequence belongs to the PRA-PH family.

Its subcellular location is the cytoplasm. The enzyme catalyses 1-(5-phospho-beta-D-ribosyl)-ATP + H2O = 1-(5-phospho-beta-D-ribosyl)-5'-AMP + diphosphate + H(+). Its pathway is amino-acid biosynthesis; L-histidine biosynthesis; L-histidine from 5-phospho-alpha-D-ribose 1-diphosphate: step 2/9. The chain is Phosphoribosyl-ATP pyrophosphatase from Ruegeria pomeroyi (strain ATCC 700808 / DSM 15171 / DSS-3) (Silicibacter pomeroyi).